A 2453-amino-acid chain; its full sequence is Tyrosine-protein phosphatase non-receptor type 13 (2453 aa).

A KIND domain is found at 3–190; the sequence is VSLAEALEVR…SGTDPLSRSS (188 aa). Residues 183 to 227 are disordered; it reads TDPLSRSSEQKPDRSQAIRDRLRGKGLPTGRSSTSDALDTHEAPL. Over residues 190–205 the composition is skewed to basic and acidic residues; it reads SEQKPDRSQAIRDRLR. A Phosphoserine modification is found at Ser240. Residues 253–285 are disordered; that stretch reads EDYLKDTPSDNNSRHEDSETFSSPYQFKTSTPQ. Positions 256-270 are enriched in basic and acidic residues; that stretch reads LKDTPSDNNSRHEDS. A compositionally biased stretch (polar residues) spans 272–285; that stretch reads TFSSPYQFKTSTPQ. 2 positions are modified to phosphoserine: Ser297 and Ser298. The tract at residues 429–457 is disordered; it reads SEASKRFESSSGLPGVDETGQTRPSRQYE. The segment covering 447–457 has biased composition (polar residues); it reads TGQTRPSRQYE. Positions 458-493 form a coiled coil; that stretch reads TSLEGNLINQDIMLRRQEEEMMQLQARMALRQSRLS. In terms of domain architecture, FERM spans 565–865; that stretch reads RKVNIRLLSG…SQHKFQLQMR (301 aa). Phosphoserine is present on residues Ser883, Ser890, Ser901, Ser904, and Ser907. The span at 944-957 shows a compositional bias: basic and acidic residues; it reads KEKTDKASWEEKPR. Disordered stretches follow at residues 944–966 and 1007–1063; these read KEKTDKASWEEKPRGMSKSYHDL and LAGL…VPFK. Ser1021 and Ser1025 each carry phosphoserine. Residues 1025 to 1034 are compositionally biased toward basic and acidic residues; it reads SPERRNHESD. A compositionally biased stretch (low complexity) spans 1049 to 1058; the sequence is SLPSSGKSSS. At Ser1076 the chain carries Phosphoserine. Positions 1084 to 1170 constitute a PDZ 1 domain; sequence LVNLKKDPKH…DVTLVISQPK (87 aa). Disordered regions lie at residues 1199 to 1356 and 1441 to 1478; these read DSAM…GDTF and GQVPTSRERDPAGPQSPPPDQDAQRQAPEKVAKQTPHV. A Phosphoserine modification is found at Ser1221. Polar residues-rich tracts occupy residues 1242-1252 and 1267-1279; these read ESASLSQSQVN and PQHSSPSPSVTTK. Ser1270 bears the Phosphoserine mark. The span at 1297–1315 shows a compositional bias: basic and acidic residues; the sequence is GISDLIEHLDCADSDKDDS. Low complexity predominate over residues 1331-1341; that stretch reads SSSLSTSNKTS. In terms of domain architecture, PDZ 2 spans 1357-1442; that stretch reads EVELAKTDGS…VVHLLLEKGQ (86 aa). Positions 1467–1478 are enriched in basic and acidic residues; it reads APEKVAKQTPHV. Positions 1491-1579 constitute a PDZ 3 domain; that stretch reads EVKLFKNSSG…EVSLLLCRPA (89 aa). The span at 1602 to 1629 shows a compositional bias: polar residues; that stretch reads LNSSKETSQPSSSVEQGASSDDNGVSGK. Disordered regions lie at residues 1602 to 1662 and 1695 to 1726; these read LNSS…AKMP and KLESESSHPPPLDVSPGQTCQPPAECAPSDAT. Basic and acidic residues predominate over residues 1638–1655; the sequence is SRRESYSDHSESGEDDSV. 2 PDZ domains span residues 1764 to 1845 and 1857 to 1942; these read LITL…GRIL and LPDI…TRDG. Disordered stretches follow at residues 1991 to 2024 and 2051 to 2139; these read EAVCPAGEGSSSQMKESAGLTETKESNSRDDDIY and RHAT…DPPF. Residues 2012–2021 show a composition bias toward basic and acidic residues; that stretch reads ETKESNSRDD. Positions 2180–2434 constitute a Tyrosine-protein phosphatase domain; that stretch reads PSKELENLQE…VFCYQVILYV (255 aa). Substrate is bound by residues Asp2345, 2375 to 2381, and Gln2419; that span reads CSAGIGR. Cys2375 acts as the Phosphocysteine intermediate in catalysis.

It belongs to the protein-tyrosine phosphatase family. Non-receptor class subfamily. Interacts (via the first PDZ domain) with PLEKHA1 and PLEKHA2. Interacts (via the second PDZ domain) with TNFRSF6 (Fas receptor) (via C-terminus). Interacts (via the second PDZ domain) with TRIP6 (via the third LIM domain and C-terminus). Interacts (via the third PDZ domain) with NGFR (via C-terminal SVP motif) and PKN2 (via C-terminus). Interacts (via the second or fourth PDZ domains) with PDLIM4 (via C-terminus only or via combined C-terminus and LIM domain, but not LIM domain only). Found in a complex with PDLIM4 and TRIP6. Interacts with PDLIM4; this interaction results in dephosphorylation of SRC 'Tyr-419' by this protein leading to its inactivation. Interacts with BRD7. Interacts with RAPGEF6. Interacts with ARHGAP29. Interacts with PIK3R2; dephosphorylates PIK3R2. Interacts with FBXL2. Interacts (via the FERM domain) with ENTR1. Found in a complex with ENTR1, PTPN13 and GIT1. In terms of tissue distribution, expressed predominantly in kidney and, to a lesser extent, in lung, heart, brain and testis.

It is found in the cytoplasm. The protein localises to the cytoskeleton. It localises to the nucleus. The protein resides in the cell projection. Its subcellular location is the lamellipodium. The catalysed reaction is O-phospho-L-tyrosyl-[protein] + H2O = L-tyrosyl-[protein] + phosphate. Functionally, tyrosine phosphatase which negatively regulates FAS-induced apoptosis and NGFR-mediated pro-apoptotic signaling. May regulate phosphoinositide 3-kinase (PI3K) signaling through dephosphorylation of PIK3R2. This is Tyrosine-protein phosphatase non-receptor type 13 (Ptpn13) from Mus musculus (Mouse).